A 147-amino-acid chain; its full sequence is Prefoldin subunit alpha (147 aa).

Belongs to the prefoldin subunit alpha family. As to quaternary structure, heterohexamer of two alpha and four beta subunits.

The protein resides in the cytoplasm. In terms of biological role, molecular chaperone capable of stabilizing a range of proteins. Seems to fulfill an ATP-independent, HSP70-like function in archaeal de novo protein folding. The sequence is that of Prefoldin subunit alpha (pfdA) from Saccharolobus solfataricus (strain ATCC 35092 / DSM 1617 / JCM 11322 / P2) (Sulfolobus solfataricus).